An 803-amino-acid chain; its full sequence is DNA polymerase 2 (803 aa).

This sequence belongs to the DNA polymerase type-B family.

The enzyme catalyses DNA(n) + a 2'-deoxyribonucleoside 5'-triphosphate = DNA(n+1) + diphosphate. This Aeropyrum pernix (strain ATCC 700893 / DSM 11879 / JCM 9820 / NBRC 100138 / K1) protein is DNA polymerase 2 (polB).